Consider the following 346-residue polypeptide: D-alanine--D-alanine ligase (346 aa).

Positions Lys134–Gln340 constitute an ATP-grasp domain. Glu161 to Phe212 is an ATP binding site. Asp284, Glu296, and Asn298 together coordinate Mg(2+).

It belongs to the D-alanine--D-alanine ligase family. It depends on Mg(2+) as a cofactor. Requires Mn(2+) as cofactor.

The protein resides in the cytoplasm. The enzyme catalyses 2 D-alanine + ATP = D-alanyl-D-alanine + ADP + phosphate + H(+). It participates in cell wall biogenesis; peptidoglycan biosynthesis. Functionally, cell wall formation. The sequence is that of D-alanine--D-alanine ligase from Sulfurovum sp. (strain NBC37-1).